Here is a 279-residue protein sequence, read N- to C-terminus: B3 domain-containing protein Os05g0481400 (279 aa).

The interval 45 to 68 (ARLQKSTRASPKPRKKFEVGATEV) is disordered. Positions 139-230 (FVKTMVRSHV…RFKIYIIKAV (92 aa)) form a DNA-binding region, TF-B3. Acidic residues-rich tracts occupy residues 233–244 (DANESEPADEEA) and 252–262 (TEDAAEQDDSP). A disordered region spans residues 233–279 (DANESEPADEEAIGDKDTSTEDAAEQDDSPNAEPLKGTKRRKLRGRR). The span at 269 to 279 (GTKRRKLRGRR) shows a compositional bias: basic residues.

The protein localises to the nucleus. This chain is B3 domain-containing protein Os05g0481400, found in Oryza sativa subsp. japonica (Rice).